Here is a 304-residue protein sequence, read N- to C-terminus: Ribosomal RNA small subunit methyltransferase H (304 aa).

S-adenosyl-L-methionine is bound by residues 37–39 (GGH), Asp57, Phe79, Asp100, and His107.

It belongs to the methyltransferase superfamily. RsmH family.

The protein resides in the cytoplasm. It carries out the reaction cytidine(1402) in 16S rRNA + S-adenosyl-L-methionine = N(4)-methylcytidine(1402) in 16S rRNA + S-adenosyl-L-homocysteine + H(+). Specifically methylates the N4 position of cytidine in position 1402 (C1402) of 16S rRNA. In Bacteroides fragilis (strain ATCC 25285 / DSM 2151 / CCUG 4856 / JCM 11019 / LMG 10263 / NCTC 9343 / Onslow / VPI 2553 / EN-2), this protein is Ribosomal RNA small subunit methyltransferase H.